The sequence spans 189 residues: MLNIVIFGAPGSGKGTQSERIVEKFGINHISTGDVLRAEIKKGTELGKTAKGYIDQGQLLPDELIIDILASTLDSFKESKGVIFDGFPRTIAQAEALKKMLAERGQEVSVMLDLDVPEEELMTRLIKRGQESGRADDNEETIKKRLVVYHSQTAPLIDWYKNEGKYQHIHGLGTMDAIFADIVAAVEKL.

Position 11–16 (11–16 (GSGKGT)) interacts with ATP. The interval 31–60 (STGDVLRAEIKKGTELGKTAKGYIDQGQLL) is NMP. Residues threonine 32, arginine 37, 58 to 60 (QLL), 86 to 89 (GFPR), and glutamine 93 contribute to the AMP site. The segment at 127–137 (KRGQESGRADD) is LID. Arginine 128 is an ATP binding site. AMP-binding residues include arginine 134 and arginine 145. Glycine 173 provides a ligand contact to ATP.

Belongs to the adenylate kinase family. As to quaternary structure, monomer.

The protein localises to the cytoplasm. The catalysed reaction is AMP + ATP = 2 ADP. It functions in the pathway purine metabolism; AMP biosynthesis via salvage pathway; AMP from ADP: step 1/1. In terms of biological role, catalyzes the reversible transfer of the terminal phosphate group between ATP and AMP. Plays an important role in cellular energy homeostasis and in adenine nucleotide metabolism. This chain is Adenylate kinase, found in Phocaeicola vulgatus (strain ATCC 8482 / DSM 1447 / JCM 5826 / CCUG 4940 / NBRC 14291 / NCTC 11154) (Bacteroides vulgatus).